We begin with the raw amino-acid sequence, 389 residues long: Succinate--CoA ligase [ADP-forming] subunit beta (389 aa).

In terms of domain architecture, ATP-grasp spans K9–K236. ATP-binding positions include K45, G52 to G54, S94, and E99. N191 and D205 together coordinate Mg(2+). Residues N256 and G318–T320 each bind substrate.

It belongs to the succinate/malate CoA ligase beta subunit family. Heterotetramer of two alpha and two beta subunits. The cofactor is Mg(2+).

The catalysed reaction is succinate + ATP + CoA = succinyl-CoA + ADP + phosphate. It carries out the reaction GTP + succinate + CoA = succinyl-CoA + GDP + phosphate. The protein operates within carbohydrate metabolism; tricarboxylic acid cycle; succinate from succinyl-CoA (ligase route): step 1/1. Functionally, succinyl-CoA synthetase functions in the citric acid cycle (TCA), coupling the hydrolysis of succinyl-CoA to the synthesis of either ATP or GTP and thus represents the only step of substrate-level phosphorylation in the TCA. The beta subunit provides nucleotide specificity of the enzyme and binds the substrate succinate, while the binding sites for coenzyme A and phosphate are found in the alpha subunit. The polypeptide is Succinate--CoA ligase [ADP-forming] subunit beta (Rhodococcus opacus (strain B4)).